The primary structure comprises 510 residues: Indoleacetate--CoA ligase (510 aa).

The protein belongs to the ATP-dependent AMP-binding enzyme family. As to quaternary structure, monomer.

It carries out the reaction (indol-3-yl)acetate + ATP + CoA = (indol-3-yl)acetyl-CoA + AMP + diphosphate. The catalysed reaction is (indol-3-yl)acetate + ATP + H(+) = (indol-3-yl)acetyl-AMP + diphosphate. The enzyme catalyses (indol-3-yl)acetyl-AMP + CoA = (indol-3-yl)acetyl-CoA + AMP + H(+). Inhibited by high concentrations of substrates, and by the synthetic auxin compound 2,4-dichlorophenoxyacetate (2,4-D), which does not serve as substrate. In terms of biological role, involved in degradation of indoleacetate, the most common member of the auxin class of plant hormones. Highly specific indoleacetate-CoA ligase which catalyzes the ATP-dependent activation of indoleacetate (IAA) to indoleacetyl-CoA. Also activates some closely related compounds such as the non-physiological compound (2-naphthyl)acetate and phenylacetate, which seems to be a fortuitous substrate for IaaB. The sequence is that of Indoleacetate--CoA ligase from Aromatoleum aromaticum (strain DSM 19018 / LMG 30748 / EbN1) (Azoarcus sp. (strain EbN1)).